The chain runs to 2070 residues: HEAT repeat-containing protein 5B (2070 aa).

HEAT repeat units follow at residues 848 to 885 (EVRK…VVGE), 1062 to 1099 (VNLS…REAA), and 1290 to 1327 (LHLS…KFAS). Serine 1737 carries the post-translational modification Phosphoserine.

Belongs to the HEATR5 family. In terms of assembly, self-associates. Component of the aftiphilin/p200/gamma-synergin complex, at least composed of AFTPH/aftiphilin, HEATR5B/p200a and SYNRG/gamma-synergin, which plays a role in the AP1G1/AP-1-mediated protein trafficking from early to recycling endosomes and between the trans-Golgi network (TGN) and endosomes. Within the complex interacts with AFTPH/aftiphilin and SYNRG/gamma-synergin; the interactions are direct. Interacts with GGA1.

It localises to the cytoplasm. It is found in the perinuclear region. The protein resides in the cytoplasmic vesicle. Its subcellular location is the clathrin-coated vesicle. Its function is as follows. Component of clathrin-coated vesicles. Component of the aftiphilin/p200/gamma-synergin complex, which plays roles in AP1G1/AP-1-mediated protein trafficking including the trafficking of transferrin from early to recycling endosomes, and the membrane trafficking of furin and the lysosomal enzyme cathepsin D between the trans-Golgi network (TGN) and endosomes. The polypeptide is HEAT repeat-containing protein 5B (Heatr5b) (Mus musculus (Mouse)).